A 260-amino-acid polypeptide reads, in one-letter code: Circadian clock-controlled protein daywake (260 aa).

Residues M1–A25 form the signal peptide.

It belongs to the TO family. Epidermis of newly eclosed adults.

Functionally, component of the circadian clock or downstream effector of clock function. Required for suppressing daytime sleep (siesta) under ambient environmental temperatures. Part of a heat avoidance mechanism that modulates daytime sleep behavior under different environmental temperatures to minimize the risk of heat exposure. Under cooler ambient temperatures, suppresses daytime sleep (siesta) and thus allows for longer periods of daytime activity. The sequence is that of Circadian clock-controlled protein daywake from Drosophila melanogaster (Fruit fly).